A 973-amino-acid chain; its full sequence is Isoleucine--tRNA ligase, mitochondrial (973 aa).

A 'HIGH' region motif is present at residues 87 to 97; that stretch reads PFANGRLHIGH. The 'KMSKS' region signature appears at 625 to 629; sequence KQSKS. Residue lysine 628 coordinates ATP.

It belongs to the class-I aminoacyl-tRNA synthetase family.

Its subcellular location is the cytoplasm. It is found in the mitochondrion matrix. It catalyses the reaction tRNA(Ile) + L-isoleucine + ATP = L-isoleucyl-tRNA(Ile) + AMP + diphosphate. The chain is Isoleucine--tRNA ligase, mitochondrial (ism1) from Schizosaccharomyces pombe (strain 972 / ATCC 24843) (Fission yeast).